A 903-amino-acid chain; its full sequence is Alanine--tRNA ligase (903 aa).

Histidine 581, histidine 585, cysteine 693, and histidine 697 together coordinate Zn(2+).

Belongs to the class-II aminoacyl-tRNA synthetase family. Zn(2+) is required as a cofactor.

It localises to the cytoplasm. It carries out the reaction tRNA(Ala) + L-alanine + ATP = L-alanyl-tRNA(Ala) + AMP + diphosphate. Catalyzes the attachment of alanine to tRNA(Ala) in a two-step reaction: alanine is first activated by ATP to form Ala-AMP and then transferred to the acceptor end of tRNA(Ala). Also edits incorrectly charged Ser-tRNA(Ala) and Gly-tRNA(Ala) via its editing domain. The chain is Alanine--tRNA ligase from Psychrobacter sp. (strain PRwf-1).